Reading from the N-terminus, the 154-residue chain is MTIKKMNVESFNLDHTKVKAPYIRVAGYKDGKVDQVVKYDIRFTQPNVEQMPMRAMHTLEHLLAENIRNYSDDVIDVSPMGCQTGFYMAMMNFDSVEKMSELVEKTLKDVLAAEEIPAQNEVQCGFASAHDLKGAKHYAEKMLAGRDEWDIVFG.

Residues H57, H61, and C124 each contribute to the Fe cation site.

This sequence belongs to the LuxS family. Homodimer. Requires Fe cation as cofactor.

It catalyses the reaction S-(5-deoxy-D-ribos-5-yl)-L-homocysteine = (S)-4,5-dihydroxypentane-2,3-dione + L-homocysteine. Involved in the synthesis of autoinducer 2 (AI-2) which is secreted by bacteria and is used to communicate both the cell density and the metabolic potential of the environment. The regulation of gene expression in response to changes in cell density is called quorum sensing. Catalyzes the transformation of S-ribosylhomocysteine (RHC) to homocysteine (HC) and 4,5-dihydroxy-2,3-pentadione (DPD). In Exiguobacterium sibiricum (strain DSM 17290 / CCUG 55495 / CIP 109462 / JCM 13490 / 255-15), this protein is S-ribosylhomocysteine lyase.